We begin with the raw amino-acid sequence, 111 residues long: COX assembly mitochondrial protein (111 aa).

The 44-residue stretch at 39 to 82 (YKKCANFVQAMADCAKANGMKVFPTCDKQRDEMKSCLLFYQTDE) folds into the CHCH domain. 2 short sequence motifs (cx9C motif) span residues 42–52 (CANFVQAMADC) and 64–74 (CDKQRDEMKSC). Disulfide bonds link C42/C74 and C52/C64.

Belongs to the CMC family.

Its subcellular location is the mitochondrion inner membrane. Functionally, required for mitochondrial cytochrome c oxidase (COX) assembly and respiration. Binds copper. May be involved in copper trafficking and distribution to mitochondrial COX and SOD1. The polypeptide is COX assembly mitochondrial protein (CMC1) (Saccharomyces cerevisiae (strain YJM789) (Baker's yeast)).